Consider the following 393-residue polypeptide: NAD(P)H-quinone oxidoreductase subunit H, chloroplastic (393 aa).

Belongs to the complex I 49 kDa subunit family. As to quaternary structure, NDH is composed of at least 16 different subunits, 5 of which are encoded in the nucleus.

The protein localises to the plastid. It is found in the chloroplast thylakoid membrane. It catalyses the reaction a plastoquinone + NADH + (n+1) H(+)(in) = a plastoquinol + NAD(+) + n H(+)(out). The catalysed reaction is a plastoquinone + NADPH + (n+1) H(+)(in) = a plastoquinol + NADP(+) + n H(+)(out). NDH shuttles electrons from NAD(P)H:plastoquinone, via FMN and iron-sulfur (Fe-S) centers, to quinones in the photosynthetic chain and possibly in a chloroplast respiratory chain. The immediate electron acceptor for the enzyme in this species is believed to be plastoquinone. Couples the redox reaction to proton translocation, and thus conserves the redox energy in a proton gradient. In Ipomoea purpurea (Common morning glory), this protein is NAD(P)H-quinone oxidoreductase subunit H, chloroplastic.